The following is a 792-amino-acid chain: Phenylalanine--tRNA ligase beta subunit (792 aa).

One can recognise a tRNA-binding domain in the interval 39–150; it reads APAFHKVVVA…PDAPVGTDFR (112 aa). Residues 405–480 form the B5 domain; sequence PARDPIRLGL…RMYGYNRIAA (76 aa). Mg(2+)-binding residues include D458, D464, E467, and E468. The region spanning 698–791 is the FDX-ACB domain; that stretch reads SKYPPIRRDI…LENRFGARLR (94 aa).

This sequence belongs to the phenylalanyl-tRNA synthetase beta subunit family. Type 1 subfamily. In terms of assembly, tetramer of two alpha and two beta subunits. Requires Mg(2+) as cofactor.

It is found in the cytoplasm. The enzyme catalyses tRNA(Phe) + L-phenylalanine + ATP = L-phenylalanyl-tRNA(Phe) + AMP + diphosphate + H(+). This Nitrosospira multiformis (strain ATCC 25196 / NCIMB 11849 / C 71) protein is Phenylalanine--tRNA ligase beta subunit.